The following is a 266-amino-acid chain: Diphthine synthase (266 aa).

Residues L9, D84, V87, 112–113 (SI), L169, A210, and H235 contribute to the S-adenosyl-L-methionine site.

It belongs to the diphthine synthase family. In terms of assembly, homodimer.

The enzyme catalyses 2-[(3S)-amino-3-carboxypropyl]-L-histidyl-[translation elongation factor 2] + 3 S-adenosyl-L-methionine = diphthine-[translation elongation factor 2] + 3 S-adenosyl-L-homocysteine + 3 H(+). The protein operates within protein modification; peptidyl-diphthamide biosynthesis. S-adenosyl-L-methionine-dependent methyltransferase that catalyzes the trimethylation of the amino group of the modified target histidine residue in translation elongation factor 2 (EF-2), to form an intermediate called diphthine. The three successive methylation reactions represent the second step of diphthamide biosynthesis. This chain is Diphthine synthase, found in Methanosarcina mazei (strain ATCC BAA-159 / DSM 3647 / Goe1 / Go1 / JCM 11833 / OCM 88) (Methanosarcina frisia).